The chain runs to 527 residues: Bifunctional purine biosynthesis protein PurH (527 aa).

In terms of domain architecture, MGS-like spans 1 to 149 (MASDFLPVRR…KNFARVAVAT (149 aa)).

The protein belongs to the PurH family.

The enzyme catalyses (6R)-10-formyltetrahydrofolate + 5-amino-1-(5-phospho-beta-D-ribosyl)imidazole-4-carboxamide = 5-formamido-1-(5-phospho-D-ribosyl)imidazole-4-carboxamide + (6S)-5,6,7,8-tetrahydrofolate. The catalysed reaction is IMP + H2O = 5-formamido-1-(5-phospho-D-ribosyl)imidazole-4-carboxamide. It functions in the pathway purine metabolism; IMP biosynthesis via de novo pathway; 5-formamido-1-(5-phospho-D-ribosyl)imidazole-4-carboxamide from 5-amino-1-(5-phospho-D-ribosyl)imidazole-4-carboxamide (10-formyl THF route): step 1/1. The protein operates within purine metabolism; IMP biosynthesis via de novo pathway; IMP from 5-formamido-1-(5-phospho-D-ribosyl)imidazole-4-carboxamide: step 1/1. The polypeptide is Bifunctional purine biosynthesis protein PurH (Xanthomonas euvesicatoria pv. vesicatoria (strain 85-10) (Xanthomonas campestris pv. vesicatoria)).